The following is a 681-amino-acid chain: Sorting nexin-41 (681 aa).

The span at 1 to 12 (MSTDNLFEDIEQ) shows a compositional bias: acidic residues. Residues 1-94 (MSTDNLFEDI…HNTSLNNGYP (94 aa)) are disordered. Polar residues predominate over residues 13–24 (DNNPSFYGNPSI). Residues 113-236 (NDSQLQVDII…KFFDPNYELC (124 aa)) enclose the PX domain. A 1,2-diacyl-sn-glycero-3-phospho-(1D-myo-inositol-3-phosphate)-binding residues include Arg-151, Ser-153, Lys-177, and Arg-200. Disordered regions lie at residues 475–505 (LASR…TENF) and 558–597 (TATG…QTSI). 2 stretches are compositionally biased toward low complexity: residues 482–497 (DNDS…NNND) and 558–589 (TATG…QSQS).

It belongs to the sorting nexin family.

It is found in the endosome membrane. Its subcellular location is the endomembrane system. In terms of biological role, may be required for cytoplasm to vacuole transport (Cvt) and pexophagy. This chain is Sorting nexin-41 (SNX41), found in Candida albicans (strain SC5314 / ATCC MYA-2876) (Yeast).